Consider the following 487-residue polypeptide: 6-phosphogluconate dehydrogenase, decarboxylating 1, chloroplastic (487 aa).

Residue M1 is modified to N-acetylmethionine. NADP(+) contacts are provided by residues 13–18 (GLAVMG), 36–38 (NRT), 80–82 (VKA), and N108. Residues N108 and 134 to 136 (SGG) each bind substrate. Residue K188 is the Proton acceptor of the active site. 191–192 (HN) serves as a coordination point for substrate. E195 acts as the Proton donor in catalysis. The substrate site is built by Y196, K266, R293, R458, and H464.

The protein belongs to the 6-phosphogluconate dehydrogenase family. Forms homodimer. Forms heterodimers with PGD2 or PGD3.

It localises to the plastid. It is found in the chloroplast. The protein localises to the cytoplasm. The protein resides in the cytosol. It carries out the reaction 6-phospho-D-gluconate + NADP(+) = D-ribulose 5-phosphate + CO2 + NADPH. Its pathway is carbohydrate degradation; pentose phosphate pathway; D-ribulose 5-phosphate from D-glucose 6-phosphate (oxidative stage): step 3/3. In terms of biological role, catalyzes the oxidative decarboxylation of 6-phosphogluconate to ribulose 5-phosphate and CO(2), with concomitant reduction of NADP to NADPH. In Arabidopsis thaliana (Mouse-ear cress), this protein is 6-phosphogluconate dehydrogenase, decarboxylating 1, chloroplastic.